The following is a 36-amino-acid chain: Protein P4 (36 aa).

A helical transmembrane segment spans residues 13 to 33; the sequence is GLQLSLLICACLLAVLIVSFC.

Its subcellular location is the host membrane. In Vitis vinifera (Grape), this protein is Protein P4.